Reading from the N-terminus, the 183-residue chain is Inner membrane-spanning protein YciB (183 aa).

5 helical membrane-spanning segments follow: residues 19 to 39, 53 to 73, 76 to 96, 121 to 141, and 151 to 171; these read LYGVQQAAITLVIATVIQLIV, IMGIFAVFFGILTAYFNDLNF, WKVTIINGLFAAVLLVSQFVF, LGWAGFFIICMLLNIVISYYF, and TFGFTGLSLIAAIATGVYLYP.

Belongs to the YciB family.

It localises to the cell inner membrane. Its function is as follows. Plays a role in cell envelope biogenesis, maintenance of cell envelope integrity and membrane homeostasis. The sequence is that of Inner membrane-spanning protein YciB from Actinobacillus pleuropneumoniae serotype 5b (strain L20).